A 475-amino-acid polypeptide reads, in one-letter code: Ribulose bisphosphate carboxylase large chain (475 aa).

A propeptide spanning residues 1–2 (MS) is cleaved from the precursor. Pro3 carries the N-acetylproline modification. Position 14 is an N6,N6,N6-trimethyllysine (Lys14). Residues Asn123 and Thr173 each contribute to the substrate site. The active-site Proton acceptor is Lys175. Lys177 contacts substrate. Residues Lys201, Asp203, and Glu204 each coordinate Mg(2+). At Lys201 the chain carries N6-carboxylysine. Residue His294 is the Proton acceptor of the active site. Arg295, His327, and Ser379 together coordinate substrate.

Belongs to the RuBisCO large chain family. Type I subfamily. In terms of assembly, heterohexadecamer of 8 large chains and 8 small chains; disulfide-linked. The disulfide link is formed within the large subunit homodimers. The cofactor is Mg(2+). The disulfide bond which can form in the large chain dimeric partners within the hexadecamer appears to be associated with oxidative stress and protein turnover.

Its subcellular location is the plastid. The protein localises to the chloroplast. The catalysed reaction is 2 (2R)-3-phosphoglycerate + 2 H(+) = D-ribulose 1,5-bisphosphate + CO2 + H2O. It catalyses the reaction D-ribulose 1,5-bisphosphate + O2 = 2-phosphoglycolate + (2R)-3-phosphoglycerate + 2 H(+). In terms of biological role, ruBisCO catalyzes two reactions: the carboxylation of D-ribulose 1,5-bisphosphate, the primary event in carbon dioxide fixation, as well as the oxidative fragmentation of the pentose substrate in the photorespiration process. Both reactions occur simultaneously and in competition at the same active site. The chain is Ribulose bisphosphate carboxylase large chain from Keteleeria davidiana (David's keteleeria).